The sequence spans 362 residues: Carbamoyl phosphate synthase small chain (362 aa).

The tract at residues Met1–Val169 is CPSase. L-glutamine contacts are provided by Ser46, Gly220, and Gly222. The Glutamine amidotransferase type-1 domain occupies Asn172–Glu358. Cys247 (nucleophile) is an active-site residue. L-glutamine-binding residues include Met248, Gln251, Asn289, Gly291, and Tyr292. Residues His331 and Asp333 contribute to the active site.

Belongs to the CarA family. As to quaternary structure, composed of two chains; the small (or glutamine) chain promotes the hydrolysis of glutamine to ammonia, which is used by the large (or ammonia) chain to synthesize carbamoyl phosphate. Tetramer of heterodimers (alpha,beta)4.

It carries out the reaction hydrogencarbonate + L-glutamine + 2 ATP + H2O = carbamoyl phosphate + L-glutamate + 2 ADP + phosphate + 2 H(+). The catalysed reaction is L-glutamine + H2O = L-glutamate + NH4(+). It functions in the pathway amino-acid biosynthesis; L-arginine biosynthesis; carbamoyl phosphate from bicarbonate: step 1/1. Its pathway is pyrimidine metabolism; UMP biosynthesis via de novo pathway; (S)-dihydroorotate from bicarbonate: step 1/3. Functionally, small subunit of the glutamine-dependent carbamoyl phosphate synthetase (CPSase). CPSase catalyzes the formation of carbamoyl phosphate from the ammonia moiety of glutamine, carbonate, and phosphate donated by ATP, constituting the first step of 2 biosynthetic pathways, one leading to arginine and/or urea and the other to pyrimidine nucleotides. The small subunit (glutamine amidotransferase) binds and cleaves glutamine to supply the large subunit with the substrate ammonia. In Streptococcus mutans serotype c (strain ATCC 700610 / UA159), this protein is Carbamoyl phosphate synthase small chain.